A 279-amino-acid chain; its full sequence is Coiled-coil domain-containing protein 106 (279 aa).

Residues 62–101 (KAQLHMALERNSWLQKRIEDLEEERDFLRCQLDKFISSAR) adopt a coiled-coil conformation. Over residues 109-121 (RMKPGPRRVDGDS) the composition is skewed to basic and acidic residues. The tract at residues 109–173 (RMKPGPRRVD…FGKTKARERQ (65 aa)) is disordered. Phosphoserine is present on Ser129. Positions 151–164 (KRQKQKGSTSRKRF) match the Bipartite nuclear localization signal motif. Basic residues predominate over residues 151–167 (KRQKQKGSTSRKRFGKT).

Interacts with p53/TP53.

It is found in the nucleus. Its function is as follows. Promotes the degradation of p53/TP53 protein and inhibits its transactivity. This is Coiled-coil domain-containing protein 106 (Ccdc106) from Mus musculus (Mouse).